The sequence spans 222 residues: Large ribosomal subunit protein uL4 (222 aa).

A disordered region spans residues 67 to 87; it reads QKGTGNARAGSKRTNVRRGGG.

This sequence belongs to the universal ribosomal protein uL4 family. Part of the 50S ribosomal subunit.

In terms of biological role, one of the primary rRNA binding proteins, this protein initially binds near the 5'-end of the 23S rRNA. It is important during the early stages of 50S assembly. It makes multiple contacts with different domains of the 23S rRNA in the assembled 50S subunit and ribosome. Forms part of the polypeptide exit tunnel. The chain is Large ribosomal subunit protein uL4 from Rhodopirellula baltica (strain DSM 10527 / NCIMB 13988 / SH1).